We begin with the raw amino-acid sequence, 408 residues long: Lysosome-associated membrane glycoprotein 3 (408 aa).

Positions 1 to 20 (MPGQTSAVAVLLCLAVILHG) are cleaved as a signal peptide. Residues 21–373 (YQIREKEFPE…IVDECLSDYT (353 aa)) are Lumenal-facing. Asparagine 55 and asparagine 225 each carry an N-linked (GlcNAc...) asparagine glycan. Cysteine 230 and cysteine 267 form a disulfide bridge. N-linked (GlcNAc...) asparagine glycosylation is present at asparagine 284. Cysteine 331 and cysteine 368 are oxidised to a cystine. A helical transmembrane segment spans residues 374 to 394 (VVLPVVGIIVVVLCVVGLGIY). Topologically, residues 395–408 (KIRQRRQSSAYQRI) are cytoplasmic.

The protein belongs to the LAMP family. As to quaternary structure, monomer. Interacts with FURIN.

The protein localises to the cell surface. Its subcellular location is the lysosome membrane. The protein resides in the cytoplasmic vesicle membrane. It is found in the early endosome membrane. Its function is as follows. Lysosomal membrane glycoprotein which plays a role in the unfolded protein response (UPR) that contributes to protein degradation and cell survival during proteasomal dysfunction. Plays a role in the process of fusion of the lysosome with the autophagosome, thereby modulating the autophagic process. Promotes hepatocellular lipogenesis through activation of the PI3K/Akt pathway. May also play a role in dendritic cell function and in adaptive immunity. The protein is Lysosome-associated membrane glycoprotein 3 (Lamp3) of Rattus norvegicus (Rat).